Reading from the N-terminus, the 276-residue chain is Elongation factor Ts, mitochondrial (276 aa).

The protein belongs to the EF-Ts family.

It is found in the mitochondrion. Its function is as follows. Associates with the EF-Tu.GDP complex and induces the exchange of GDP to GTP. It remains bound to the aminoacyl-tRNA.EF-Tu.GTP complex up to the GTP hydrolysis stage on the ribosome. This chain is Elongation factor Ts, mitochondrial, found in Leishmania braziliensis.